Reading from the N-terminus, the 791-residue chain is Protein FAM47A (791 aa).

3 disordered regions span residues 195–257 (PVSH…TRRR), 274–409 (EDAR…TGVC), and 449–573 (VKKT…SEPP). Basic and acidic residues-rich tracts occupy residues 274–288 (EDAR…KTTD) and 333–342 (GESHLRLEHS). The span at 349 to 358 (SLRSEPSETG) shows a compositional bias: polar residues. A compositionally biased stretch (basic and acidic residues) spans 449 to 462 (VKKTKEPTEPHKSP).

The protein belongs to the FAM47 family.

This is Protein FAM47A (FAM47A) from Homo sapiens (Human).